We begin with the raw amino-acid sequence, 1161 residues long: Nuclear pore complex-interacting protein family member B11 (1161 aa).

Residues 63 to 87 traverse the membrane as a helical segment; sequence IIIAFPTSYKVVITLWIVYLWVSLL. Disordered stretches follow at residues 278–580 and 892–1161; these read ADDN…DDNI and SADD…RRLS. Residues 311 to 321 show a composition bias toward pro residues; that stretch reads PLPPSAPPSAP. 9 stretches are compositionally biased toward basic and acidic residues: residues 368–378, 410–420, 452–462, 494–504, 536–546, 918–928, 960–970, 1002–1012, and 1044–1054; these read DNIKTTAERLR, DNIKTPAEHLR, DNIKTPAERLR, and DNIKTTAEHLR.

Belongs to the NPIP family.

The protein resides in the membrane. The protein is Nuclear pore complex-interacting protein family member B11 (NPIPB11) of Homo sapiens (Human).